The following is a 187-amino-acid chain: ATP synthase subunit b 2 (187 aa).

A compositionally biased stretch (polar residues) spans 1-13; that stretch reads MAESHATGTTTHT. Residues 1–21 are disordered; that stretch reads MAESHATGTTTHTEVPHGKPE. The helical transmembrane segment at 31-53 threads the bilayer; the sequence is ASQLVSFAIAFALLYVIVSRFAL.

The protein belongs to the ATPase B chain family. As to quaternary structure, F-type ATPases have 2 components, F(1) - the catalytic core - and F(0) - the membrane proton channel. F(1) has five subunits: alpha(3), beta(3), gamma(1), delta(1), epsilon(1). F(0) has three main subunits: a(1), b(2) and c(10-14). The alpha and beta chains form an alternating ring which encloses part of the gamma chain. F(1) is attached to F(0) by a central stalk formed by the gamma and epsilon chains, while a peripheral stalk is formed by the delta and b chains.

The protein resides in the cell inner membrane. Functionally, f(1)F(0) ATP synthase produces ATP from ADP in the presence of a proton or sodium gradient. F-type ATPases consist of two structural domains, F(1) containing the extramembraneous catalytic core and F(0) containing the membrane proton channel, linked together by a central stalk and a peripheral stalk. During catalysis, ATP synthesis in the catalytic domain of F(1) is coupled via a rotary mechanism of the central stalk subunits to proton translocation. Its function is as follows. Component of the F(0) channel, it forms part of the peripheral stalk, linking F(1) to F(0). The b'-subunit is a diverged and duplicated form of b found in plants and photosynthetic bacteria. This is ATP synthase subunit b 2 (atpF2) from Afipia carboxidovorans (strain ATCC 49405 / DSM 1227 / KCTC 32145 / OM5) (Oligotropha carboxidovorans).